The primary structure comprises 559 residues: MMLPRCFVTVLLMSSVLYIGGETSSEVLGPVVSTEAGSFQGMELTTHGERVIYAFLGIPYAKPPTGLLRFKKPQPADFIQGTYKATEKPPSCFQLDSDLQLPWADPDSPMKEDCLFLNLWTPASLSTEEEELKSVMVWIHGGGYTSGSSALDVYDGQTLSSSGDVVVVTMNYRLDAFGFLNSLTEDAPGNMALYDQLLALQWVHTNIKYFGGDPNKVTLFGESVGAFATSFLALSPLTKGLFQKIMLESGSAYNKLTVNSIDQAKNNNQLATLVGCANETFTLISNPEEVVACMREVAPAKFTQTYYKELGSEREKINFIFWPHFGDDILPTRTAELIKEKNLTALFAGVNSVEGSALSVFFFPEVYQMFVESNLTLTKAYATILMNEFFKVFNFQDSAKAIEFYLGDVEDDDEEGIRSALFGVVGDYIITCPTIYLADKYSERGANVQFYRFDRRPSTSQWPPEWMGAAHNDEIQFVFGMPVRYPEKYTEEERTLSEYMTRTWTNFVKSEDLKLKNGSQWPSYSLSEPQFATLQTNEQIIGSGQRKAECDFWRPYFDI.

The signal sequence occupies residues 1-21; that stretch reads MMLPRCFVTVLLMSSVLYIGG. An intrachain disulfide couples C92 to C114. A substrate-binding site is contributed by 142 to 143; the sequence is GG. S223 functions as the Acyl-ester intermediate in the catalytic mechanism. A Phosphoserine modification is found at S223. C276 and C293 are oxidised to a cystine. N278 and N342 each carry an N-linked (GlcNAc...) asparagine glycan. The active-site Charge relay system is the E354. N374 is a glycosylation site (N-linked (GlcNAc...) asparagine). A disulfide bond links C432 and C550. Catalysis depends on H471, which acts as the Charge relay system.

This sequence belongs to the type-B carboxylesterase/lipase family. Expressed by the venom gland.

It is found in the secreted. It catalyses the reaction acetylcholine + H2O = choline + acetate + H(+). Its function is as follows. Terminates signal transduction at the neuromuscular junction by rapid hydrolysis of the acetylcholine released into the synaptic cleft. The polypeptide is Acetylcholinesterase-1 (Trittame loki (Brush-footed trapdoor spider)).